The sequence spans 414 residues: Glucose-1-phosphate adenylyltransferase (414 aa).

Residues tyrosine 103, glycine 168, 183-184 (EK), and serine 201 contribute to the alpha-D-glucose 1-phosphate site.

The protein belongs to the bacterial/plant glucose-1-phosphate adenylyltransferase family. As to quaternary structure, homotetramer.

The catalysed reaction is alpha-D-glucose 1-phosphate + ATP + H(+) = ADP-alpha-D-glucose + diphosphate. It functions in the pathway glycan biosynthesis; glycogen biosynthesis. In terms of biological role, involved in the biosynthesis of ADP-glucose, a building block required for the elongation reactions to produce glycogen. Catalyzes the reaction between ATP and alpha-D-glucose 1-phosphate (G1P) to produce pyrophosphate and ADP-Glc. The polypeptide is Glucose-1-phosphate adenylyltransferase (Thermus thermophilus (strain ATCC 27634 / DSM 579 / HB8)).